Reading from the N-terminus, the 355-residue chain is Squamosa promoter-binding protein-like 15 (355 aa).

The tract at residues 1-27 (MELLKGSGLNQTESGGSSSTESSSLSG) is disordered. Residues 12-27 (TESGGSSSTESSSLSG) are compositionally biased toward low complexity. The segment at 61–138 (TARCQVEGCR…ACHNERRRKP (78 aa)) adopts an SBP-type zinc-finger fold. Residues cysteine 64, cysteine 69, cysteine 86, histidine 89, cysteine 105, cysteine 108, histidine 112, and cysteine 124 each coordinate Zn(2+). The Bipartite nuclear localization signal signature appears at 121 to 137 (KRSCRRRLACHNERRRK).

The protein resides in the nucleus. Functionally, probable transcription factor required for the flowering response to vernalization in the shoot apical meristem (SAM). Defines the competence of shoot meristems to flower in response to vernalization in perennials. The chain is Squamosa promoter-binding protein-like 15 from Arabis alpina (Alpine rock-cress).